We begin with the raw amino-acid sequence, 308 residues long: PAK4-inhibitor inka1 (308 aa).

The segment at 81–105 (EEEESASDPSAVSSPSSERSLEFDS) is disordered. Residues 87–98 (SDPSAVSSPSSE) are compositionally biased toward low complexity. 2 inka box regions span residues 164–201 (DPED…DLPE) and 281–308 (DTDY…IGYI).

The protein belongs to the INKA family. Interacts with pak4/pak5.

The protein resides in the nucleus. The protein localises to the cytoplasm. In terms of biological role, inhibitor of the serine/threonine-protein kinase pak4/pak5. Acts by binding pak4/pak5 in a substrate-like manner, inhibiting the protein kinase activity. Required for the proper migration of neural crest cells during embryonic development, probably by inhibiting pak4/pak5. The chain is PAK4-inhibitor inka1 from Danio rerio (Zebrafish).